A 454-amino-acid chain; its full sequence is Glutamyl-tRNA(Gln) amidotransferase subunit A (454 aa).

Active-site charge relay system residues include Lys-56 and Ser-131. The active-site Acyl-ester intermediate is the Ser-155.

It belongs to the amidase family. GatA subfamily. In terms of assembly, heterotrimer of A, B and C subunits.

It carries out the reaction L-glutamyl-tRNA(Gln) + L-glutamine + ATP + H2O = L-glutaminyl-tRNA(Gln) + L-glutamate + ADP + phosphate + H(+). Functionally, allows the formation of correctly charged Gln-tRNA(Gln) through the transamidation of misacylated Glu-tRNA(Gln) in organisms which lack glutaminyl-tRNA synthetase. The reaction takes place in the presence of glutamine and ATP through an activated gamma-phospho-Glu-tRNA(Gln). The protein is Glutamyl-tRNA(Gln) amidotransferase subunit A of Campylobacter lari (strain RM2100 / D67 / ATCC BAA-1060).